The sequence spans 213 residues: V-type ATP synthase subunit D (213 aa).

This sequence belongs to the V-ATPase D subunit family.

Functionally, produces ATP from ADP in the presence of a proton gradient across the membrane. This chain is V-type ATP synthase subunit D, found in Clostridium botulinum (strain Alaska E43 / Type E3).